The primary structure comprises 1041 residues: Importin-9 (1041 aa).

A2 is modified (N-acetylalanine). Positions 43–119 (AEEQIKVLEV…RELLPNGLRE (77 aa)) constitute an Importin N-terminal domain. Residues 936 to 967 (QATPAEWSQDDSNDMWEDQEEEEEEEEDGLAG) form a disordered region. Positions 943–964 (SQDDSNDMWEDQEEEEEEEEDG) are enriched in acidic residues.

Belongs to the importin beta family. In terms of assembly, interacts with histones H2A, H2B, H3 and H4. The binding is coupled to RanGTP cycles. Interacts with AKIRIN2; promoting association with pre-assembled proteasomes. Associates with pre-assembled proteasomes; interaction is indirect and mediated via interaction with AKIRIN2. Interacts with PPP2R1A and PPP2R1B.

The protein resides in the cytoplasm. Its subcellular location is the nucleus. In terms of biological role, nuclear transport receptor that mediates nuclear import of proteins, such as histones, proteasome and actin. Serves as receptor for nuclear localization signals (NLS) in cargo substrates. Is thought to mediate docking of the importin/substrate complex to the nuclear pore complex (NPC) through binding to nucleoporin and the complex is subsequently translocated through the pore by an energy requiring, Ran-dependent mechanism. At the nucleoplasmic side of the NPC, Ran binds to the importin, the importin/substrate complex dissociates and importin is re-exported from the nucleus to the cytoplasm where GTP hydrolysis releases Ran. The directionality of nuclear import is thought to be conferred by an asymmetric distribution of the GTP- and GDP-bound forms of Ran between the cytoplasm and nucleus. Mediates the import of pre-assembled proteasomes into the nucleus; AKIRIN2 acts as a molecular bridge between IPO9 and the proteasome complex. Mediates the nuclear import of histones H2A, H2B, H4 and H4. In addition to nuclear import, also acts as a chaperone for histones by preventing inappropriate non-nucleosomal interactions. Mediates the nuclear import of actin. This Homo sapiens (Human) protein is Importin-9.